Consider the following 96-residue polypeptide: uncharacterized protein (96 aa).

This is an uncharacterized protein from Bacillus subtilis (strain 168).